We begin with the raw amino-acid sequence, 400 residues long: MNFLLCIFKGVYVIKLIQRFFKLESAGGILLLFSAVVAMLLANSPLSNQYNDFLNLPVSLQIGSFSINKTLIHWINDGFMAVFFVLVGMEVKKELFEGALSTYQQAIFPAIAAIGGMVIPAVVYWFIAKQDPSLANGWAIPMATDIAFALGIMALLSKQVPLPLKIFLLALAIIDDLGAIVVIALFFSHGLSVQALIFSAVAIIALILLNRFKVSALCAYMVVGAILWASVLKSGVHATLAGVIIGFSIPLKGKKGERPLDDFEHILSSWSSFVILPLFAFANAGVSFAGIDVNMISSPLLLAIASGLIIGKPVGIFGFSYISVKLGLAKLPDGINFKQIFAVAVLCGIGFTMSMFLASLAFDANAGESVNTLSRLGILLGSTVSAILGYLFLKQTTKLS.

12 helical membrane-spanning segments follow: residues 26–46 (AGGI…NSPL), 71–91 (LIHW…GMEV), 107–127 (IFPA…YWFI), 137–157 (GWAI…ALLS), 166–186 (IFLL…IALF), 189–209 (HGLS…LILL), 212–232 (FKVS…ASVL), 233–253 (KSGV…PLKG), 273–293 (FVIL…GIDV), 299–319 (PLLL…IFGF), 340–360 (IFAV…LASL), and 373–393 (LSRL…YLFL).

Belongs to the NhaA Na(+)/H(+) (TC 2.A.33) antiporter family.

Its subcellular location is the cell inner membrane. It catalyses the reaction Na(+)(in) + 2 H(+)(out) = Na(+)(out) + 2 H(+)(in). Its function is as follows. Na(+)/H(+) antiporter that extrudes sodium in exchange for external protons. This Haemophilus influenzae (strain PittGG) protein is Na(+)/H(+) antiporter NhaA.